The following is a 210-amino-acid chain: Cytochrome c biogenesis ATP-binding export protein CcmA (210 aa).

The 208-residue stretch at 1 to 208 (MHLNQLVISH…KVRTLSLDQF (208 aa)) folds into the ABC transporter domain. Residue 38 to 45 (GHNGIGKT) coordinates ATP.

The protein belongs to the ABC transporter superfamily. CcmA exporter (TC 3.A.1.107) family. As to quaternary structure, the complex is composed of two ATP-binding proteins (CcmA) and two transmembrane proteins (CcmB).

It is found in the cell inner membrane. It carries out the reaction heme b(in) + ATP + H2O = heme b(out) + ADP + phosphate + H(+). Functionally, part of the ABC transporter complex CcmAB involved in the biogenesis of c-type cytochromes; once thought to export heme, this seems not to be the case, but its exact role is uncertain. Responsible for energy coupling to the transport system. The sequence is that of Cytochrome c biogenesis ATP-binding export protein CcmA from Haemophilus ducreyi (strain 35000HP / ATCC 700724).